Consider the following 344-residue polypeptide: tRNA N6-adenosine threonylcarbamoyltransferase (344 aa).

Fe cation is bound by residues His-113 and His-117. Residues 135–139, Asp-169, Gly-182, Asp-186, and Asn-278 contribute to the substrate site; that span reads LVSGG. Asp-306 lines the Fe cation pocket. Positions 325-344 are disordered; the sequence is ESPISVGTDPSLSVETPQVF. Polar residues predominate over residues 326-344; it reads SPISVGTDPSLSVETPQVF.

It belongs to the KAE1 / TsaD family. Fe(2+) is required as a cofactor.

Its subcellular location is the cytoplasm. The enzyme catalyses L-threonylcarbamoyladenylate + adenosine(37) in tRNA = N(6)-L-threonylcarbamoyladenosine(37) in tRNA + AMP + H(+). Functionally, required for the formation of a threonylcarbamoyl group on adenosine at position 37 (t(6)A37) in tRNAs that read codons beginning with adenine. Is involved in the transfer of the threonylcarbamoyl moiety of threonylcarbamoyl-AMP (TC-AMP) to the N6 group of A37, together with TsaE and TsaB. TsaD likely plays a direct catalytic role in this reaction. The chain is tRNA N6-adenosine threonylcarbamoyltransferase from Corynebacterium glutamicum (strain R).